Here is a 289-residue protein sequence, read N- to C-terminus: Ribosomal RNA small subunit methyltransferase A (289 aa).

Positions 21, 23, 48, 69, 94, and 120 each coordinate S-adenosyl-L-methionine.

The protein belongs to the class I-like SAM-binding methyltransferase superfamily. rRNA adenine N(6)-methyltransferase family. RsmA subfamily.

The protein resides in the cytoplasm. The catalysed reaction is adenosine(1518)/adenosine(1519) in 16S rRNA + 4 S-adenosyl-L-methionine = N(6)-dimethyladenosine(1518)/N(6)-dimethyladenosine(1519) in 16S rRNA + 4 S-adenosyl-L-homocysteine + 4 H(+). In terms of biological role, specifically dimethylates two adjacent adenosines (A1518 and A1519) in the loop of a conserved hairpin near the 3'-end of 16S rRNA in the 30S particle. May play a critical role in biogenesis of 30S subunits. This is Ribosomal RNA small subunit methyltransferase A from Actinobacillus pleuropneumoniae serotype 3 (strain JL03).